Reading from the N-terminus, the 690-residue chain is Sodium-dependent phosphate transport protein 2B (690 aa).

Residues 1-42 (MAPWPELGDAQPNPDKYLEGAAGQQPTAPDKSKETNKTDNTE) form a disordered region. The Cytoplasmic segment spans residues 1–100 (MAPWPELGDA…ILCFFQGIGR (100 aa)). Residues 30–40 (DKSKETNKTDN) show a composition bias toward basic and acidic residues. A helical transmembrane segment spans residues 101 to 121 (LILLLGFLYFFVCSLDILSSA). Topologically, residues 122-135 (FQLVGGKMAGQFFS) are extracellular. The chain crosses the membrane as a helical span at residues 136–156 (NSSIMSNPLLGLVIGVLVTVL). Residues 157-212 (VQSSSTSTSIVVSMVSSSLLTVRAAIPIIMGANIGTSITNTIVALMQVGDRSEFRR) are Cytoplasmic-facing. A helical membrane pass occupies residues 213–233 (AFAGATVHDFFNWLSVLVLLP). The Extracellular portion of the chain corresponds to 234–362 (VEVATHYLEI…IFVNFHLPDL (129 aa)). 5 N-linked (GlcNAc...) asparagine glycosylation sites follow: Asn295, Asn308, Asn313, Asn321, and Asn340. An intrachain disulfide couples Cys303 to Cys350. Residues 363-383 (AVGTILLILSLLVLCGCLIMI) form a helical membrane-spanning segment. The Cytoplasmic segment spans residues 384–407 (VKILGSVLKGQVATVIKKTINTDF). Residues 408–428 (PFPFAWLTGYLAILVGAGMTF) form a helical membrane-spanning segment. The Extracellular portion of the chain corresponds to 429–485 (IVQSSSVFTSALTPLIGIGVITIERAYPLTLGSNIGTTTTAILAALASPGNALRSSL). A helical transmembrane segment spans residues 486-506 (QIALCHFFFNISGILLWYPIP). At 507–525 (FTRLPIRMAKGLGNISAKY) the chain is on the cytoplasmic side. The chain crosses the membrane as a helical span at residues 526 to 546 (RWFAVFYLIIFFFLIPLTVFG). Residues 547–552 (LSLAGW) are Extracellular-facing. A helical transmembrane segment spans residues 553 to 573 (RVLVGVGVPVVFIIILVLCLR). Topologically, residues 574-689 (LLQSRCPRVL…ASDSKTECTA (116 aa)) are cytoplasmic.

It belongs to the SLC34A transporter family. Highly expressed in lung. Also detected in pancreas, kidney, small intestine, ovary, testis, prostate and mammary gland. In lung, it is found in alveolar type II cells but not in bronchiolar epithelium.

Its subcellular location is the apical cell membrane. The catalysed reaction is 3 Na(+)(out) + phosphate(out) = 3 Na(+)(in) + phosphate(in). Involved in actively transporting phosphate into cells via Na(+) cotransport. This chain is Sodium-dependent phosphate transport protein 2B (SLC34A2), found in Homo sapiens (Human).